The chain runs to 260 residues: MQIGLVAQSPLDQFEIVPLIPMNIGNFYFSFTNSSLFMLLTLSFFLLLIHFITKKGGGNLVPNAWQSLVELLYDFVLNLVKEQIGGLSGNVKQMFFPCILVTFLFLLFCNLQGMIPYSFTVTSHFLITLALSFSIFIGITIVGFQRHGLHFFSFLLPAGVPLPLAPFLVLLELISYCFRALSLGIRLFANMMAGHSLVKILSGFAWTMLCMNEIFYFIGALGPLFIVLALTGLELGVAILQAYVFTILICIYLNDAINLH.

The next 7 helical transmembrane spans lie at 29–49 (FSFT…LLLI), 95–115 (FFPC…QGMI), 124–144 (HFLI…IVGF), 151–171 (FFSF…LVLL), 191–211 (MMAG…MLCM), 213–233 (EIFY…LTGL), and 237–257 (VAIL…NDAI).

The protein belongs to the ATPase A chain family. As to quaternary structure, F-type ATPases have 2 components, CF(1) - the catalytic core - and CF(0) - the membrane proton channel. CF(1) has five subunits: alpha(3), beta(3), gamma(1), delta(1), epsilon(1). CF(0) has three main subunits: a, b and c.

The protein resides in the mitochondrion inner membrane. Functionally, mitochondrial membrane ATP synthase (F(1)F(0) ATP synthase or Complex V) produces ATP from ADP in the presence of a proton gradient across the membrane which is generated by electron transport complexes of the respiratory chain. F-type ATPases consist of two structural domains, F(1) - containing the extramembraneous catalytic core and F(0) - containing the membrane proton channel, linked together by a central stalk and a peripheral stalk. During catalysis, ATP synthesis in the catalytic domain of F(1) is coupled via a rotary mechanism of the central stalk subunits to proton translocation. Key component of the proton channel; it may play a direct role in the translocation of protons across the membrane. This is ATP synthase subunit a (ATP6) from Brassica napus (Rape).